The primary structure comprises 492 residues: 3-octaprenyl-4-hydroxybenzoate carboxy-lyase (492 aa).

Asn-177 contributes to the Mn(2+) binding site. Residues 180–182 (IYR), 194–196 (RWL), and 199–200 (RG) each bind prenylated FMN. Glu-243 contacts Mn(2+). The active-site Proton donor is the Asp-292.

This sequence belongs to the UbiD family. Homohexamer. Requires prenylated FMN as cofactor. The cofactor is Mn(2+).

It is found in the cell membrane. The catalysed reaction is a 4-hydroxy-3-(all-trans-polyprenyl)benzoate + H(+) = a 2-(all-trans-polyprenyl)phenol + CO2. Its pathway is cofactor biosynthesis; ubiquinone biosynthesis. Catalyzes the decarboxylation of 3-octaprenyl-4-hydroxy benzoate to 2-octaprenylphenol, an intermediate step in ubiquinone biosynthesis. The polypeptide is 3-octaprenyl-4-hydroxybenzoate carboxy-lyase (Neisseria meningitidis serogroup A / serotype 4A (strain DSM 15465 / Z2491)).